A 210-amino-acid polypeptide reads, in one-letter code: TBC1 domain family member 28 (210 aa).

A Rab-GAP TBC domain is found at 101-210 (VIPLAVRGRA…WVSLGGVATS (110 aa)).

The sequence is that of TBC1 domain family member 28 (TBC1D28) from Homo sapiens (Human).